The sequence spans 192 residues: Adenylate kinase (192 aa).

10–18 (GVPGVGGTT) provides a ligand contact to ATP.

It belongs to the archaeal adenylate kinase family. In terms of assembly, monomer.

It is found in the cytoplasm. It carries out the reaction AMP + ATP = 2 ADP. The polypeptide is Adenylate kinase (Methanococcus maripaludis (strain C6 / ATCC BAA-1332)).